The chain runs to 132 residues: Global transcriptional regulator Spx (132 aa).

Cys-10 and Cys-13 form a disulfide bridge.

It belongs to the ArsC family. Spx subfamily. In terms of assembly, interacts with the C-terminal domain of the alpha subunit of the RNAP.

It is found in the cytoplasm. Functionally, global transcriptional regulator that plays a key role in stress response and exerts either positive or negative regulation of genes. Acts by interacting with the C-terminal domain of the alpha subunit of the RNA polymerase (RNAP). This interaction can enhance binding of RNAP to the promoter region of target genes and stimulate their transcription, or block interaction of RNAP with activator. The chain is Global transcriptional regulator Spx from Lactiplantibacillus plantarum (strain ATCC BAA-793 / NCIMB 8826 / WCFS1) (Lactobacillus plantarum).